The following is a 1299-amino-acid chain: Cilia- and flagella-associated protein 251 (1299 aa).

The disordered stretch occupies residues 1–351 (MSDTEENPLE…SQKPEDILAQ (351 aa)). 3 stretches are compositionally biased toward acidic residues: residues 17–45 (EMEE…EEEE), 91–162 (EKEE…EEDA), and 176–189 (ESQE…EWVE). Basic and acidic residues predominate over residues 190 to 199 (KEEQREGEEV). Residues 212-228 (EEEGWEEEKSGEEEKSE) show a composition bias toward acidic residues. The segment covering 229–257 (ESERSKERGGEEEGQEKEEAEHEGEREEG) has biased composition (basic and acidic residues). A compositionally biased stretch (acidic residues) spans 269–280 (REEEEEEEDTET). Composition is skewed to basic and acidic residues over residues 281 to 297 (TETK…EKQN) and 331 to 351 (NSMK…ILAQ). WD repeat units follow at residues 484–526 (PVHT…IWKW), 534–574 (ACTL…CWFE), 585–624 (VLTE…VWDI), 643–678 (PRKL…FYDH), 681–741 (SVVN…VYHM), 745–785 (GTKL…VWDF), 791–828 (LFSR…ILDA), 838–874 (PFKY…MVVV), 881–924 (WEYL…EYNL), 935–975 (LDVH…LFNA), 981–1027 (RKTL…ILPV), 1033–1071 (KTCA…QWKI), 1109–1149 (YFYY…FYPS), and 1169–1209 (GKLI…GYTN).

Its subcellular location is the cytoplasm. It localises to the cytoskeleton. It is found in the cilium axoneme. The protein resides in the cell projection. The protein localises to the cilium. Its subcellular location is the flagellum. Its function is as follows. Involved in spermatozoa motility. May also regulate cilium motility through its role in the assembly of the axonemal radial spokes. The sequence is that of Cilia- and flagella-associated protein 251 from Mus musculus (Mouse).